Reading from the N-terminus, the 874-residue chain is Leucine--tRNA ligase (874 aa).

Residues 43–53 (PYPSGRIHIGH) carry the 'HIGH' region motif. The disordered stretch occupies residues 614–634 (LDDGSPVTVGPPEKMSKSKKN). A 'KMSKS' region motif is present at residues 627-631 (KMSKS). Lys-630 contacts ATP.

Belongs to the class-I aminoacyl-tRNA synthetase family.

Its subcellular location is the cytoplasm. It catalyses the reaction tRNA(Leu) + L-leucine + ATP = L-leucyl-tRNA(Leu) + AMP + diphosphate. The chain is Leucine--tRNA ligase from Azorhizobium caulinodans (strain ATCC 43989 / DSM 5975 / JCM 20966 / LMG 6465 / NBRC 14845 / NCIMB 13405 / ORS 571).